We begin with the raw amino-acid sequence, 260 residues long: Hydroxyethylthiazole kinase (260 aa).

Residues R126 and S172 each coordinate ATP. Position 199 (G199) interacts with substrate.

Belongs to the Thz kinase family. The cofactor is Mg(2+).

The catalysed reaction is 5-(2-hydroxyethyl)-4-methylthiazole + ATP = 4-methyl-5-(2-phosphooxyethyl)-thiazole + ADP + H(+). It functions in the pathway cofactor biosynthesis; thiamine diphosphate biosynthesis; 4-methyl-5-(2-phosphoethyl)-thiazole from 5-(2-hydroxyethyl)-4-methylthiazole: step 1/1. Functionally, catalyzes the phosphorylation of the hydroxyl group of 4-methyl-5-beta-hydroxyethylthiazole (THZ). This Burkholderia thailandensis (strain ATCC 700388 / DSM 13276 / CCUG 48851 / CIP 106301 / E264) protein is Hydroxyethylthiazole kinase.